The primary structure comprises 726 residues: Dipeptidyl-peptidase 5 (726 aa).

Residues 1-19 (MAAAKWLIASLAFASSGLA) form the signal peptide. Residues Asn96 and Asn252 are each glycosylated (N-linked (GlcNAc...) asparagine). Residues 269–291 (AEPINKRNGPRTPQGIEGASSSP) form a disordered region. Ser558 serves as the catalytic Charge relay system. Asn605 carries N-linked (GlcNAc...) asparagine glycosylation. Catalysis depends on charge relay system residues Asp641 and His673. N-linked (GlcNAc...) asparagine glycosylation is present at Asn699.

This sequence belongs to the peptidase S9C family.

Its subcellular location is the secreted. The protein is Dipeptidyl-peptidase 5 (DPPV) of Arthroderma benhamiae (Trichophyton mentagrophytes).